The sequence spans 320 residues: MDTDYGTVHTQQSVKGNTLILLIYFISFIVGFPGNCTVIWFTGYRWKKSVTTIWFLNLAIADTLFVIFIPFEITYILMGHYWPFGLFVCRIGSLMFNTGMYASIFFLTFISIDRYCLAFRRDICNKYRYRINIMVMIIISWIISILLSTPYMYFKNTNEKYRNNRDCLEDYHSDNNTYLLRRVVFCISLVMRYLVPSVVMLFCYCLLLFKHSLFLSKGQTYTIVIMITSFMVLWTPYNILYFIDVIGSHYYNADTIIDAAPISISLIFLSSSINPMIYMLVGRYVSFENYSMRESLKLILSEERDNQTNHENEIKMENIN.

Over 1-18 (MDTDYGTVHTQQSVKGNT) the chain is Extracellular. A helical membrane pass occupies residues 19 to 39 (LILLIYFISFIVGFPGNCTVI). The Cytoplasmic segment spans residues 40 to 52 (WFTGYRWKKSVTT). The helical transmembrane segment at 53–73 (IWFLNLAIADTLFVIFIPFEI) threads the bilayer. Residues 74–91 (TYILMGHYWPFGLFVCRI) are Extracellular-facing. A disulfide bridge connects residues Cys89 and Cys167. Residues 92–112 (GSLMFNTGMYASIFFLTFISI) traverse the membrane as a helical segment. At 113 to 133 (DRYCLAFRRDICNKYRYRINI) the chain is on the cytoplasmic side. The chain crosses the membrane as a helical span at residues 134–154 (MVMIIISWIISILLSTPYMYF). Topologically, residues 155 to 188 (KNTNEKYRNNRDCLEDYHSDNNTYLLRRVVFCIS) are extracellular. Asn175 carries an N-linked (GlcNAc...) asparagine; by host glycan. The chain crosses the membrane as a helical span at residues 189 to 209 (LVMRYLVPSVVMLFCYCLLLF). The Cytoplasmic segment spans residues 210 to 222 (KHSLFLSKGQTYT). The chain crosses the membrane as a helical span at residues 223 to 243 (IVIMITSFMVLWTPYNILYFI). Residues 244-260 (DVIGSHYYNADTIIDAA) are Extracellular-facing. A helical membrane pass occupies residues 261–281 (PISISLIFLSSSINPMIYMLV). Topologically, residues 282–320 (GRYVSFENYSMRESLKLILSEERDNQTNHENEIKMENIN) are cytoplasmic.

It belongs to the G-protein coupled receptor 1 family.

The protein resides in the host cell membrane. This is G-protein coupled receptor homolog FPV021 from Vertebrata (FPV).